The primary structure comprises 1377 residues: DNA-directed RNA polymerase subunit beta' (1377 aa).

The Zn(2+) site is built by C60, C62, C75, and C78. Mg(2+) is bound by residues D449, D451, and D453. The Zn(2+) site is built by C777, C851, C858, and C861.

This sequence belongs to the RNA polymerase beta' chain family. The RNAP catalytic core consists of 2 alpha, 1 beta, 1 beta' and 1 omega subunit. When a sigma factor is associated with the core the holoenzyme is formed, which can initiate transcription. It depends on Mg(2+) as a cofactor. Zn(2+) is required as a cofactor.

The enzyme catalyses RNA(n) + a ribonucleoside 5'-triphosphate = RNA(n+1) + diphosphate. Its function is as follows. DNA-dependent RNA polymerase catalyzes the transcription of DNA into RNA using the four ribonucleoside triphosphates as substrates. In Borrelia hermsii (strain HS1 / DAH), this protein is DNA-directed RNA polymerase subunit beta'.